The following is a 579-amino-acid chain: Putative diflavin flavoprotein A 2 (579 aa).

The segment at 50–243 (QNGTTYNSYL…GKIKIIANGH (194 aa)) is zinc metallo-hydrolase. 6 residues coordinate Fe cation: histidine 99, glutamate 101, aspartate 103, histidine 166, aspartate 185, and histidine 243. Residues 272 to 460 (VGLFYVADYG…MLASWVSQAS (189 aa)) form the Flavodoxin-like domain. The flavodoxin-reductase-like stretch occupies residues 461-579 (LQPLGFTIAV…VRHRKVGNYY (119 aa)).

This sequence in the N-terminal section; belongs to the zinc metallo-hydrolase group 3 family. It in the C-terminal section; belongs to the flavodoxin reductase family. Fe cation is required as a cofactor.

Its function is as follows. Mediates electron transfer from NADH to oxygen, reducing it to water. This modular protein has 3 redox cofactors, in other organisms the same activity requires 2 or 3 proteins. This Nostoc sp. (strain PCC 7120 / SAG 25.82 / UTEX 2576) protein is Putative diflavin flavoprotein A 2 (dfa2).